The following is a 559-amino-acid chain: Dihydroxy-acid dehydratase (559 aa).

Cys-56 provides a ligand contact to [2Fe-2S] cluster. Asp-88 is a Mg(2+) binding site. Cys-129 contributes to the [2Fe-2S] cluster binding site. Mg(2+)-binding residues include Asp-130 and Lys-131. At Lys-131 the chain carries N6-carboxylysine. Cys-198 contacts [2Fe-2S] cluster. Glu-449 is a binding site for Mg(2+). Ser-475 serves as the catalytic Proton acceptor.

Belongs to the IlvD/Edd family. Homodimer. Requires [2Fe-2S] cluster as cofactor. Mg(2+) serves as cofactor.

The enzyme catalyses (2R)-2,3-dihydroxy-3-methylbutanoate = 3-methyl-2-oxobutanoate + H2O. The catalysed reaction is (2R,3R)-2,3-dihydroxy-3-methylpentanoate = (S)-3-methyl-2-oxopentanoate + H2O. Its pathway is amino-acid biosynthesis; L-isoleucine biosynthesis; L-isoleucine from 2-oxobutanoate: step 3/4. The protein operates within amino-acid biosynthesis; L-valine biosynthesis; L-valine from pyruvate: step 3/4. Functions in the biosynthesis of branched-chain amino acids. Catalyzes the dehydration of (2R,3R)-2,3-dihydroxy-3-methylpentanoate (2,3-dihydroxy-3-methylvalerate) into 2-oxo-3-methylpentanoate (2-oxo-3-methylvalerate) and of (2R)-2,3-dihydroxy-3-methylbutanoate (2,3-dihydroxyisovalerate) into 2-oxo-3-methylbutanoate (2-oxoisovalerate), the penultimate precursor to L-isoleucine and L-valine, respectively. The polypeptide is Dihydroxy-acid dehydratase (Ruthia magnifica subsp. Calyptogena magnifica).